We begin with the raw amino-acid sequence, 92 residues long: Sec-independent protein translocase protein TatA (92 aa).

Residues 1 to 21 traverse the membrane as a helical segment; it reads MGIFDWKHWIVILVVVVLVFG. Residues 43 to 92 form a disordered region; the sequence is MNDDEKPADPTVTPAQPVPPVQPQATAQANPPHTIDVQAQKVEEPIRKDV. The span at 65–74 shows a compositional bias: low complexity; the sequence is PQATAQANPP. Residues 83-92 show a composition bias toward basic and acidic residues; it reads KVEEPIRKDV.

This sequence belongs to the TatA/E family. As to quaternary structure, the Tat system comprises two distinct complexes: a TatABC complex, containing multiple copies of TatA, TatB and TatC subunits, and a separate TatA complex, containing only TatA subunits. Substrates initially bind to the TatABC complex, which probably triggers association of the separate TatA complex to form the active translocon.

The protein localises to the cell inner membrane. Its function is as follows. Part of the twin-arginine translocation (Tat) system that transports large folded proteins containing a characteristic twin-arginine motif in their signal peptide across membranes. TatA could form the protein-conducting channel of the Tat system. This Pseudomonas fluorescens (strain Pf0-1) protein is Sec-independent protein translocase protein TatA.